The primary structure comprises 448 residues: Histidine--tRNA ligase (448 aa).

This sequence belongs to the class-II aminoacyl-tRNA synthetase family. As to quaternary structure, homodimer.

It is found in the cytoplasm. It catalyses the reaction tRNA(His) + L-histidine + ATP = L-histidyl-tRNA(His) + AMP + diphosphate + H(+). The sequence is that of Histidine--tRNA ligase from Treponema denticola (strain ATCC 35405 / DSM 14222 / CIP 103919 / JCM 8153 / KCTC 15104).